Here is a 79-residue protein sequence, read N- to C-terminus: uncharacterized protein (79 aa).

An N-terminal signal peptide occupies residues 1–19; that stretch reads MKYVALAFVLSLVILQISA.

Nacreous layer of shell (at protein level). Expressed primarily in the mantle with highest level in the mantle pallium and lower level in the mantle edge.

The protein resides in the secreted. This is an uncharacterized protein from Pinctada maxima (Silver-lipped pearl oyster).